The sequence spans 751 residues: Nucleoporin NUP37 (751 aa).

The stretch at 21–65 (SLGRRIYDVKTYPVQSPQGATILIYGHENGATVVWRGGRRLKPPK) is one WD 1 repeat. The tract at residues 57–77 (GGRRLKPPKPQTNEKRNGTKP) is disordered. A compositionally biased stretch (basic and acidic residues) spans 68–77 (TNEKRNGTKP). WD repeat units follow at residues 162-209 (TNDV…LTGP), 237-271 (AQAA…KPGT), 282-322 (YLPS…LPSD), and 351-390 (TSRK…PTAA). Residues 419-443 (EGTSPLRNPTTQKASSSSSGEFVPM) form a disordered region. Polar residues predominate over residues 423–438 (PLRNPTTQKASSSSSG). WD repeat units lie at residues 455–492 (AFGG…VLFL) and 494–534 (GADP…RMIR). A disordered region spans residues 671–692 (IPSTDAGDEETIPATSAPSSQQ). Positions 683 to 692 (PATSAPSSQQ) are enriched in polar residues. Residues 716–750 (RDVEQELLDIMEIDRELEQLEQARERGRKRVFFEE) adopt a coiled-coil conformation.

As to quaternary structure, the nuclear pore complex (NPC) constitutes the exclusive means of nucleocytoplasmic transport. NPCs allow the passive diffusion of ions and small molecules and the active, nuclear transport receptor-mediated bidirectional transport of macromolecules such as proteins, RNAs, ribonucleoparticles (RNPs), and ribosomal subunits across the nuclear envelope. The 55-60 MDa NPC is composed of at least 28 different subunits: AMO1, ELYS, GLE1, GLE2, MLP1, NDC1, NIC96, NSP1, NUP133, NUP145, NUP152, NUP159, NUP170, NUP188, NUP192, NUP37, NUP49, NUP53, NUP56, NUP57, NUP82, NUP84, NUP85, POM152, POM33, POM34, SEC13 and SEH1. Due to its 8-fold rotational symmetry, all subunits are present with 8 copies or multiples thereof.

The protein resides in the nucleus. The protein localises to the nuclear pore complex. This Chaetomium thermophilum (strain DSM 1495 / CBS 144.50 / IMI 039719) (Thermochaetoides thermophila) protein is Nucleoporin NUP37 (NUP37).